The chain runs to 1500 residues: ABC transporter G family member 42 (1500 aa).

The disordered stretch occupies residues 26-56 (VDEAFMPQNSGGGGGSRGRRRSGRGGTADDD). The 274-residue stretch at 182-455 (LGLVGVRPGR…FESCGFRCPE (274 aa)) folds into the ABC transporter 1 domain. An ATP-binding site is contributed by 215-222 (GPPSSGKT). Residues 533–746 (ELLKASFAKE…GYNALAVNEF (214 aa)) enclose the ABC transmembrane type-2 1 domain. The next 7 membrane-spanning stretches (helical) occupy residues 551–571 (FVYI…STVF), 584–604 (GFVY…NGFA), 639–659 (IPFS…TIGF), 670–690 (LLLV…TAGL), 695–715 (IIAQ…GGFL), 724–744 (WWIW…LAVN), and 783–803 (FWIG…LFTL). Basic and acidic residues predominate over residues 822 to 834 (TAKEAEGNGDARH). The interval 822–850 (TAKEAEGNGDARHTVRNGSTKSNGGNHKE) is disordered. Residues 837-846 (RNGSTKSNGG) show a composition bias toward polar residues. The ABC transporter 2 domain occupies 894–1151 (MSFDDVNYYV…KMIEYFEAIP (258 aa)). 939 to 946 (GVSGAGKT) is a binding site for ATP. One can recognise an ABC transmembrane type-2 2 domain in the interval 1224-1438 (GQFRACLWKQ…TVYGLIVTQY (215 aa)). The next 7 helical transmembrane spans lie at 1245–1265 (LVRF…FWKI), 1277–1297 (MVIG…CATV), 1331–1351 (IPYV…MMSF), 1358–1378 (FFWF…YGMM), 1388–1408 (VAAI…GFFI), 1416–1436 (WWIW…LIVT), and 1472–1492 (VVAP…AICI).

It belongs to the ABC transporter superfamily. ABCG family. PDR (TC 3.A.1.205) subfamily.

Its subcellular location is the membrane. In terms of biological role, may be a general defense protein. This chain is ABC transporter G family member 42, found in Oryza sativa subsp. japonica (Rice).